We begin with the raw amino-acid sequence, 102 residues long: NADH-quinone oxidoreductase subunit K 1 (102 aa).

Helical transmembrane passes span 5 to 25 (LLHV…CVLV), 30 to 50 (IIMM…AFVG), and 62 to 82 (VFAL…LALV).

The protein belongs to the complex I subunit 4L family. NDH-1 is composed of 14 different subunits. Subunits NuoA, H, J, K, L, M, N constitute the membrane sector of the complex.

It is found in the cell inner membrane. It catalyses the reaction a quinone + NADH + 5 H(+)(in) = a quinol + NAD(+) + 4 H(+)(out). Its function is as follows. NDH-1 shuttles electrons from NADH, via FMN and iron-sulfur (Fe-S) centers, to quinones in the respiratory chain. The immediate electron acceptor for the enzyme in this species is believed to be ubiquinone. Couples the redox reaction to proton translocation (for every two electrons transferred, four hydrogen ions are translocated across the cytoplasmic membrane), and thus conserves the redox energy in a proton gradient. The protein is NADH-quinone oxidoreductase subunit K 1 of Geotalea uraniireducens (strain Rf4) (Geobacter uraniireducens).